The sequence spans 70 residues: Alpha-toxin Bot9 (70 aa).

The 64-residue stretch at 6-69 (RDGYIVYPNN…PIKDPSYKCY (64 aa)) folds into the LCN-type CS-alpha/beta domain. 4 disulfides stabilise this stretch: Cys16/Cys68, Cys20/Cys40, Cys26/Cys50, and Cys30/Cys52.

This sequence belongs to the long (4 C-C) scorpion toxin superfamily. Sodium channel inhibitor family. Alpha subfamily. Expressed by the venom gland.

It is found in the secreted. Functionally, alpha toxins bind voltage-independently at site-3 of sodium channels (Nav) and inhibit the inactivation of the activated channels, thereby blocking neuronal transmission. This toxin is active against rat Nav1.2/SCN2A and B.germanica Nav1. The polypeptide is Alpha-toxin Bot9 (Buthus occitanus tunetanus (Common European scorpion)).